Consider the following 942-residue polypeptide: Nuclear receptor coactivator 7 (942 aa).

Met-1 is modified (N-acetylmethionine). A compositionally biased stretch (basic and acidic residues) spans 1–12; that stretch reads MDTKEEKKERKQ. The segment at 1 to 46 is disordered; it reads MDTKEEKKERKQSYFARLKKKKQAKQNAETASAVATRTHTGKEDNN. Residues 4-29 adopt a coiled-coil conformation; it reads KEEKKERKQSYFARLKKKKQAKQNAE. Positions 25 to 38 are enriched in polar residues; the sequence is KQNAETASAVATRT. A Phosphoserine modification is found at Ser-89. Residues 114 to 157 enclose the LysM domain; sequence MEYTAGNQDTLNSIALKFNITPNKLVELNKLFTHTIVPGQVLFV. Thr-134 carries the phosphothreonine modification. Positions 161 to 188 are disordered; the sequence is NSPSSTLRLSSSSPGATVSPSSSDAEYD. Positions 162-183 are enriched in low complexity; sequence SPSSTLRLSSSSPGATVSPSSS. Phosphoserine is present on residues Ser-179, Ser-183, Ser-208, Ser-209, and Ser-211. Residues 324-416 form a disordered region; that stretch reads KFKSINKEKR…ENFLGEDDDF (93 aa). Polar residues predominate over residues 356–368; the sequence is GHTPTKPSGSSVS. A compositionally biased stretch (basic and acidic residues) spans 369–381; it reads EKLKKLDSSRETS. Phosphoserine occurs at positions 441, 500, and 502. In terms of domain architecture, TLDc spans 781-942; the sequence is ALLENMHIEQ…VQDLEVWAFD (162 aa).

Belongs to the OXR1 family. As to quaternary structure, interacts with ESR1, ESR2A, ESR2B, THRB, PPARG and RARA in a ligand-inducible manner. Interacts with the heterodimer AHR-ARNT. Highly expressed in brain. Weakly expressed in mammary gland, ovary, uterus, prostate, stomach, bladder, spinal cord and pancreas. Expressed in cancer cell line.

The protein resides in the nucleus. Its function is as follows. Enhances the transcriptional activities of several nuclear receptors. Involved in the coactivation of different nuclear receptors, such as ESR1, THRB, PPARG and RARA. This chain is Nuclear receptor coactivator 7 (NCOA7), found in Homo sapiens (Human).